The following is a 272-amino-acid chain: Deaminated glutathione amidase (272 aa).

The CN hydrolase domain maps to Met1–Pro253. Glu43 functions as the Proton acceptor in the catalytic mechanism. Residue Lys115 is the Proton donor of the active site. Cys158 functions as the Nucleophile in the catalytic mechanism.

Belongs to the carbon-nitrogen hydrolase superfamily. NIT1/NIT2 family.

The enzyme catalyses N-(4-oxoglutaryl)-L-cysteinylglycine + H2O = L-cysteinylglycine + 2-oxoglutarate. Its function is as follows. Hydrolyzes deaminated glutathione (dGSH, 2-oxoglutaramate) to alpha-ketoglutarate (alpha-KG) and cysteinylglycine (specific activity 7.77 umol/min/mg), hydrolyzes alpha-ketoglutaramate (a-KGM, specific activity 2.13 umol/min/mg), has no activity on glutathione or L-glutamine. May function as a metabolite repair enzyme. This Synechocystis sp. (strain PCC 6803 / GT-S) protein is Deaminated glutathione amidase.